A 368-amino-acid polypeptide reads, in one-letter code: Agmatine deiminase (368 aa).

Catalysis depends on C357, which acts as the Amidino-cysteine intermediate.

This sequence belongs to the agmatine deiminase family. In terms of assembly, homodimer.

It catalyses the reaction agmatine + H2O = N-carbamoylputrescine + NH4(+). Its pathway is amine and polyamine biosynthesis; putrescine biosynthesis via agmatine pathway; N-carbamoylputrescine from agmatine: step 1/1. Mediates the hydrolysis of agmatine into N-carbamoylputrescine in the arginine decarboxylase (ADC) pathway of putrescine biosynthesis, a basic polyamine. This is Agmatine deiminase from Pseudomonas putida (strain ATCC 700007 / DSM 6899 / JCM 31910 / BCRC 17059 / LMG 24140 / F1).